We begin with the raw amino-acid sequence, 619 residues long: Chaperone protein HscA homolog (619 aa).

This sequence belongs to the heat shock protein 70 family.

In terms of biological role, chaperone involved in the maturation of iron-sulfur cluster-containing proteins. Has a low intrinsic ATPase activity which is markedly stimulated by HscB. The protein is Chaperone protein HscA homolog of Laribacter hongkongensis (strain HLHK9).